A 104-amino-acid chain; its full sequence is ATP-dependent Clp protease adapter protein ClpS (104 aa).

The protein belongs to the ClpS family. Binds to the N-terminal domain of the chaperone ClpA.

Its function is as follows. Involved in the modulation of the specificity of the ClpAP-mediated ATP-dependent protein degradation. The polypeptide is ATP-dependent Clp protease adapter protein ClpS (Desulforapulum autotrophicum (strain ATCC 43914 / DSM 3382 / VKM B-1955 / HRM2) (Desulfobacterium autotrophicum)).